A 549-amino-acid polypeptide reads, in one-letter code: MKRVLTALAATLPFAANAADAISGAVERQPTNWQAIIMFLIFVVFTLGITYWASKRVRSRNDYYTAGGNITGFQNGLAIAGDYMSAASFLGISALVFTSGYDGLIYSLGFLVGWPIILFLIAERLRNLGRYTFADVASYRLKQGPIRILSACGSLVVVALYLIAQMVGAGKLIELLFGLNYHIAVVLVGVLMMMYVLFGGMLATTWVQIIKAVLLLFGASFMAFMVMKHVGFSFNNLFSEAMAVHPKGVDIMKPGGLVKDPISALSLGLGLMFGTAGLPHILMHFFTVSDAREARKSVFYATGFMGYFYILTFIIGFGAIMLVGANPEYKDAAGHLIGGNNMAAVHLANAVGGNLFLGFISAVAFATILAVVAGLTLAGASAVSHDLYANVFKKGATEREELRVSKITVLILGVIAIILGVLFENQNIAFMVGLAFAIAASCNFPIILLSMYWSKLTTRGAMLGGWLGLITAVVLMILGPTIWVQILGHEKAIFPYEYPALFSISVAFLGIWLFSATDNSAEGARERELFRAQFIRSQTGFGVEQGRAH.

At 1–32 (MKRVLTALAATLPFAANAADAISGAVERQPTN) the chain is on the periplasmic side. A helical transmembrane segment spans residues 33–55 (WQAIIMFLIFVVFTLGITYWASK). The Cytoplasmic segment spans residues 56–75 (RVRSRNDYYTAGGNITGFQN). A helical membrane pass occupies residues 76-98 (GLAIAGDYMSAASFLGISALVFT). Topologically, residues 99-102 (SGYD) are periplasmic. Residues 103 to 125 (GLIYSLGFLVGWPIILFLIAERL) traverse the membrane as a helical segment. Topologically, residues 126-145 (RNLGRYTFADVASYRLKQGP) are cytoplasmic. A helical membrane pass occupies residues 146-168 (IRILSACGSLVVVALYLIAQMVG). Over 169-182 (AGKLIELLFGLNYH) the chain is Periplasmic. A helical transmembrane segment spans residues 183–205 (IAVVLVGVLMMMYVLFGGMLATT). Topologically, residues 206 to 211 (WVQIIK) are cytoplasmic. The helical transmembrane segment at 212–234 (AVLLLFGASFMAFMVMKHVGFSF) threads the bilayer. Topologically, residues 235-263 (NNLFSEAMAVHPKGVDIMKPGGLVKDPIS) are periplasmic. A helical transmembrane segment spans residues 264 to 286 (ALSLGLGLMFGTAGLPHILMHFF). The Cytoplasmic portion of the chain corresponds to 287 to 297 (TVSDAREARKS). Residues 298 to 320 (VFYATGFMGYFYILTFIIGFGAI) traverse the membrane as a helical segment. Residues 321–358 (MLVGANPEYKDAAGHLIGGNNMAAVHLANAVGGNLFLG) lie on the Periplasmic side of the membrane. Residues 359-381 (FISAVAFATILAVVAGLTLAGAS) form a helical membrane-spanning segment. Residues 382 to 401 (AVSHDLYANVFKKGATEREE) are Cytoplasmic-facing. A helical membrane pass occupies residues 402-424 (LRVSKITVLILGVIAIILGVLFE). Residues 425–427 (NQN) lie on the Periplasmic side of the membrane. A helical transmembrane segment spans residues 428–450 (IAFMVGLAFAIAASCNFPIILLS). Residues 451-461 (MYWSKLTTRGA) are Cytoplasmic-facing. Residues 462 to 484 (MLGGWLGLITAVVLMILGPTIWV) traverse the membrane as a helical segment. The Periplasmic portion of the chain corresponds to 485-493 (QILGHEKAI). The helical transmembrane segment at 494-516 (FPYEYPALFSISVAFLGIWLFSA) threads the bilayer. The Cytoplasmic segment spans residues 517 to 549 (TDNSAEGARERELFRAQFIRSQTGFGVEQGRAH).

Belongs to the sodium:solute symporter (SSF) (TC 2.A.21) family.

It is found in the cell inner membrane. Its function is as follows. Transports acetate. The chain is Cation/acetate symporter ActP (actP) from Escherichia coli O6:H1 (strain CFT073 / ATCC 700928 / UPEC).